The sequence spans 240 residues: NKG2-E type II integral membrane protein (240 aa).

Residues 1–12 (MSKQRGTFSEVS) show a composition bias toward polar residues. A disordered region spans residues 1 to 31 (MSKQRGTFSEVSLAQDPKWQQRKPKGNKSSI). Residues 1–70 (MSKQRGTFSE…CQGLLPPPEK (70 aa)) are Cytoplasmic-facing. A helical; Signal-anchor for type II membrane protein transmembrane segment spans residues 71–93 (LTAEVLGIICIVLMATVLKTIVL). At 94–240 (IPFLEQNNSS…IMLTRLVLNS (147 aa)) the chain is on the extracellular side. N-linked (GlcNAc...) asparagine glycosylation occurs at N100. The 115-residue stretch at 116-230 (HCPEEWITYS…GSSRIIRRGF (115 aa)) folds into the C-type lectin domain. A disulfide bond links C117 and C128. N-linked (GlcNAc...) asparagine glycosylation is found at N149 and N179. A disulfide bridge links C207 with C220.

As to quaternary structure, can form disulfide-bonded heterodimer with CD94. Natural killer cells.

Its subcellular location is the membrane. Its function is as follows. Plays a role as a receptor for the recognition of MHC class I HLA-E molecules by NK cells and some cytotoxic T-cells. The polypeptide is NKG2-E type II integral membrane protein (KLRC3) (Homo sapiens (Human)).